The sequence spans 157 residues: Cyclic pyranopterin monophosphate synthase (157 aa).

Substrate-binding positions include methionine 74–histidine 76 and methionine 112–glutamate 113. The active site involves aspartate 127.

It belongs to the MoaC family. In terms of assembly, homohexamer; trimer of dimers.

It catalyses the reaction (8S)-3',8-cyclo-7,8-dihydroguanosine 5'-triphosphate = cyclic pyranopterin phosphate + diphosphate. The protein operates within cofactor biosynthesis; molybdopterin biosynthesis. Its function is as follows. Catalyzes the conversion of (8S)-3',8-cyclo-7,8-dihydroguanosine 5'-triphosphate to cyclic pyranopterin monophosphate (cPMP). The protein is Cyclic pyranopterin monophosphate synthase of Syntrophomonas wolfei subsp. wolfei (strain DSM 2245B / Goettingen).